We begin with the raw amino-acid sequence, 355 residues long: MAGCCCLSAEEKESQRISAEIERQLRRDKKDARRELKLLLLGTGESGKSTFIKQMRIIHGSGYSDEDRKGFTKLVYQNIFTAMQAMIRAMDTLKIQYVCEQNKENAQLIREVEVDKVSTLSRDQVEAIKQLWQDPGIQECYDRRREYQLSDSAKYYLTDIDRIAMPAFVPTQQDVLRVRVPTTGIIEYPFDLENIIFRMVDVGGQRSERRKWIHCFESVTSIIFLVALSEYDQVLAECDNENRMEESKALFKTIITYPWFLNSSVILFLNKKDLLEEKIMYSHLISYFPEYTGPKQDVKAARDFILKLYQDQNPDKEKVIYSHFTCATDTENIRFVFAAVKDTILQLNLREFNLV.

The G-alpha domain occupies 34 to 355 (RELKLLLLGT…QLNLREFNLV (322 aa)). The G1 motif stretch occupies residues 37–50 (KLLLLGTGESGKST). Residues 42–49 (GTGESGKS), 176–182 (LRVRVPT), 201–205 (DVGGQ), 270–273 (NKKD), and Ala327 contribute to the GTP site. Mg(2+) contacts are provided by Ser49 and Thr182. The interval 174-182 (DVLRVRVPT) is G2 motif. A G3 motif region spans residues 197-206 (FRMVDVGGQR). Residues 266 to 273 (ILFLNKKD) form a G4 motif region. The tract at residues 325–330 (TCATDT) is G5 motif.

The protein belongs to the G-alpha family. G(q) subfamily. In terms of assembly, g proteins are composed of 3 units; alpha, beta and gamma. The alpha chain contains the guanine nucleotide binding site.

In terms of biological role, guanine nucleotide-binding proteins (G proteins) are involved as modulators or transducers in various transmembrane signaling systems. This Bos taurus (Bovine) protein is Guanine nucleotide-binding protein subunit alpha-14 (GNA14).